A 412-amino-acid polypeptide reads, in one-letter code: Serine hydroxymethyltransferase (412 aa).

(6S)-5,6,7,8-tetrahydrofolate contacts are provided by residues Leu120 and 124-126 (GHL). The residue at position 229 (Lys229) is an N6-(pyridoxal phosphate)lysine. 352 to 354 (SPF) is a (6S)-5,6,7,8-tetrahydrofolate binding site.

It belongs to the SHMT family. As to quaternary structure, homodimer. Pyridoxal 5'-phosphate is required as a cofactor.

It localises to the cytoplasm. The catalysed reaction is (6R)-5,10-methylene-5,6,7,8-tetrahydrofolate + glycine + H2O = (6S)-5,6,7,8-tetrahydrofolate + L-serine. Its pathway is one-carbon metabolism; tetrahydrofolate interconversion. It functions in the pathway amino-acid biosynthesis; glycine biosynthesis; glycine from L-serine: step 1/1. In terms of biological role, catalyzes the reversible interconversion of serine and glycine with tetrahydrofolate (THF) serving as the one-carbon carrier. This reaction serves as the major source of one-carbon groups required for the biosynthesis of purines, thymidylate, methionine, and other important biomolecules. Also exhibits THF-independent aldolase activity toward beta-hydroxyamino acids, producing glycine and aldehydes, via a retro-aldol mechanism. This is Serine hydroxymethyltransferase from Ruminiclostridium cellulolyticum (strain ATCC 35319 / DSM 5812 / JCM 6584 / H10) (Clostridium cellulolyticum).